A 1166-amino-acid polypeptide reads, in one-letter code: IQ domain-containing protein N (1166 aa).

The span at 1–19 shows a compositional bias: polar residues; that stretch reads MQPATQLQFTNHLSPNGQC. Positions 1-56 are disordered; sequence MQPATQLQFTNHLSPNGQCILQPPPTPSLPDKMEKAPPQPQHEGLKSEEHLPQQPA. The IQ 1 domain maps to 89–118; the sequence is HARAATLIQANWRGYRLRQKLISQMTAAKA. Disordered stretches follow at residues 431–450, 769–797, and 829–848; these read VCPG…VATP, LSAP…TTQG, and DSGA…PCQE. 5 consecutive IQ domains span residues 907 to 932, 928 to 955, 952 to 979, 1091 to 1119, and 1114 to 1143; these read AVTT…RRAT, HRRA…RATT, RATT…MLHP, RDKA…MAAK, and QQMA…LLGP. The segment at 1145–1166 is disordered; that stretch reads DPWSSSQHMHWASSQHTHWPGI. A compositionally biased stretch (polar residues) spans 1147-1166; that stretch reads WSSSQHMHWASSQHTHWPGI.

As to quaternary structure, interacts with calmodulin.

In terms of biological role, essential for spermiogenesis and fertilization. May be required for manchette assembly in elongating spermatids. The sequence is that of IQ domain-containing protein N (IQCN) from Macaca fascicularis (Crab-eating macaque).